Consider the following 1435-residue polypeptide: Putative ATP-dependent RNA helicase YLR419W (1435 aa).

Disordered stretches follow at residues 1–57 (MAKK…STAS) and 226–251 (LSSHGGISSSGKDRQERKVASHKNSH). S9 carries the post-translational modification Phosphoserine. A compositionally biased stretch (basic and acidic residues) spans 31–43 (KGQEPEPEDDKRA). A compositionally biased stretch (polar residues) spans 45 to 57 (QQSNRAKVTSTAS). The 42-residue stretch at 365-406 (PLSTRMIVERLTEIGVSSDEALLALQQNDMNENEAAGFLTRE) folds into the UBA domain. Positions 430–531 (QELESLESIY…EWLKENISKI (102 aa)) constitute an RWD domain. The segment at 543–566 (DSKGAINKRNISNGKRSINNSSSR) is disordered. A compositionally biased stretch (polar residues) spans 551 to 566 (RNISNGKRSINNSSSR). The Helicase ATP-binding domain occupies 614-782 (IDIINKNEVV…FPGLATCHIE (169 aa)). Residue 627 to 634 (GETGSGKS) coordinates ATP. The DEAH box signature appears at 729-732 (DEVH). Phosphoserine is present on S816. One can recognise a Helicase C-terminal domain in the interval 845-1020 (LLCQVVEYVH…SLYLSVKAMG (176 aa)).

The protein belongs to the DEAD box helicase family. DEAH subfamily.

The protein resides in the cytoplasm. It catalyses the reaction ATP + H2O = ADP + phosphate + H(+). Probable ATP-binding RNA helicase. The protein is Putative ATP-dependent RNA helicase YLR419W of Saccharomyces cerevisiae (strain ATCC 204508 / S288c) (Baker's yeast).